A 504-amino-acid polypeptide reads, in one-letter code: Glutamate--tRNA ligase (504 aa).

Positions Pro27 to Leu37 match the 'HIGH' region motif. The short motif at Lys271–Arg275 is the 'KMSKS' region element. ATP is bound at residue Lys274.

It belongs to the class-I aminoacyl-tRNA synthetase family. Glutamate--tRNA ligase type 1 subfamily. As to quaternary structure, monomer.

The protein localises to the cytoplasm. The enzyme catalyses tRNA(Glu) + L-glutamate + ATP = L-glutamyl-tRNA(Glu) + AMP + diphosphate. Catalyzes the attachment of glutamate to tRNA(Glu) in a two-step reaction: glutamate is first activated by ATP to form Glu-AMP and then transferred to the acceptor end of tRNA(Glu). The protein is Glutamate--tRNA ligase of Arthrobacter sp. (strain FB24).